The sequence spans 354 residues: Abasic site processing protein HMCES (354 aa).

The Nucleophile role is filled by C2. C2 is subject to Thiazolidine linkage to a ring-opened DNA abasic site. E127 is an active-site residue. Glycyl lysine isopeptide (Lys-Gly) (interchain with G-Cter in SUMO2) cross-links involve residues K148 and K151. Residue S160 is modified to Phosphoserine. K276 is covalently cross-linked (Glycyl lysine isopeptide (Lys-Gly) (interchain with G-Cter in SUMO2)). Residues 292-354 (ATKSPKKEDS…EPVAKRPYSQ (63 aa)) are disordered. A Phosphoserine modification is found at S295. A compositionally biased stretch (basic and acidic residues) spans 296–309 (PKKEDSKTPQKEES). Residue K306 forms a Glycyl lysine isopeptide (Lys-Gly) (interchain with G-Cter in SUMO2) linkage. Residue S322 is modified to Phosphoserine. The short motif at 332–338 (GLLEQWL) is the PIP-box element. Residues 337–348 (WLKREKEEEPVA) show a composition bias toward basic and acidic residues. Residues K339 and K342 each participate in a glycyl lysine isopeptide (Lys-Gly) (interchain with G-Cter in SUMO2) cross-link.

This sequence belongs to the SOS response-associated peptidase family. In terms of assembly, interacts (via PIP-box motif) with PCNA. Post-translationally, ubiquitinated; the covalent HMCES DNA-protein cross-link is ubiquitinated, leading to its degradation by the proteasome.

It localises to the chromosome. Its activity is regulated as follows. Formation and reversal of DNA-protein cross-link depends on DNA context. Catalyzes formation of the thiazolidine linkage in presence of abasic sites in single-stranded DNA. Mediates the reversal of the thiazolidine cross-link in presence of double stranded DNA. Functionally, sensor of abasic sites in single-stranded DNA (ssDNA) required to preserve genome integrity by promoting error-free repair of abasic sites. Acts as an enzyme that recognizes and binds abasic sites in ssDNA at replication forks and chemically modifies the lesion by forming a covalent cross-link with DNA: forms a stable thiazolidine linkage between a ring-opened abasic site and the alpha-amino and sulfhydryl substituents of its N-terminal catalytic cysteine residue. Promotes error-free repair by protecting abasic sites from translesion synthesis (TLS) polymerases and endonucleases that are error-prone and would generate mutations and double-strand breaks. The HMCES DNA-protein cross-link is then either reversed or degraded. HMCES is able to catalyze the reversal of its thiazolidine cross-link and cycle between a cross-link and a non-cross-linked state depending on DNA context: mediates self-reversal of the thiazolidine cross-link in double stranded DNA, allowing APEX1 to initiate downstream repair of abasic sites. The HMCES DNA-protein cross-link can also be degraded by the SPRTN metalloprotease following unfolding by the BRIP1/FANCJ helicase. Has preference for ssDNA, but can also accommodate double-stranded DNA with 3' or 5' overhang (dsDNA), and dsDNA-ssDNA 3' junction. Plays a protective role during somatic hypermutation of immunoglobulin genes in B-cells: acts via its ability to form covalent cross-links with abasic sites, thereby limiting the accumulation of deletions in somatic hypermutation target regions. Also involved in class switch recombination (CSR) in B-cells independently of the formation of a DNA-protein cross-link: acts by binding and protecting ssDNA overhangs to promote DNA double-strand break repair through the microhomology-mediated alternative-end-joining (Alt-EJ) pathway. Acts as a protease: mediates autocatalytic processing of its N-terminal methionine in order to expose the catalytic cysteine. The chain is Abasic site processing protein HMCES from Pongo abelii (Sumatran orangutan).